The primary structure comprises 405 residues: Probable tRNA sulfurtransferase (405 aa).

The THUMP domain occupies 60-165 (DQVMARLSQV…REAIYLSTKT (106 aa)). Residues 183-184 (ML), 208-209 (HF), Arg-265, Gly-287, and Gln-296 contribute to the ATP site.

This sequence belongs to the ThiI family.

It localises to the cytoplasm. It catalyses the reaction [ThiI sulfur-carrier protein]-S-sulfanyl-L-cysteine + a uridine in tRNA + 2 reduced [2Fe-2S]-[ferredoxin] + ATP + H(+) = [ThiI sulfur-carrier protein]-L-cysteine + a 4-thiouridine in tRNA + 2 oxidized [2Fe-2S]-[ferredoxin] + AMP + diphosphate. It carries out the reaction [ThiS sulfur-carrier protein]-C-terminal Gly-Gly-AMP + S-sulfanyl-L-cysteinyl-[cysteine desulfurase] + AH2 = [ThiS sulfur-carrier protein]-C-terminal-Gly-aminoethanethioate + L-cysteinyl-[cysteine desulfurase] + A + AMP + 2 H(+). It functions in the pathway cofactor biosynthesis; thiamine diphosphate biosynthesis. Its function is as follows. Catalyzes the ATP-dependent transfer of a sulfur to tRNA to produce 4-thiouridine in position 8 of tRNAs, which functions as a near-UV photosensor. Also catalyzes the transfer of sulfur to the sulfur carrier protein ThiS, forming ThiS-thiocarboxylate. This is a step in the synthesis of thiazole, in the thiamine biosynthesis pathway. The sulfur is donated as persulfide by IscS. The polypeptide is Probable tRNA sulfurtransferase (Lacticaseibacillus casei (strain BL23) (Lactobacillus casei)).